Reading from the N-terminus, the 652-residue chain is Proline-rich receptor-like protein kinase PERK1 (652 aa).

The segment at 1-137 (MSTAPSPGTT…PPSDSSDGLS (137 aa)) is disordered. Topologically, residues 1–139 (MSTAPSPGTT…SDSSDGLSTG (139 aa)) are extracellular. Pro residues predominate over residues 8–19 (GTTPSPSPPSPP). N-linked (GlcNAc...) asparagine glycans are attached at residues Asn-21 and Asn-50. The segment covering 26–112 (TPPPAASSPP…PSPNQGPPNT (87 aa)) has biased composition (pro residues). The span at 113–137 (PSGSTPRTPSNTKPSPPSDSSDGLS) shows a compositional bias: low complexity. A helical membrane pass occupies residues 140 to 160 (VVVGIAIGGVAILVILTLICL). Residues 161–652 (LCKKKRRRRH…TGQGYSGPSL (492 aa)) are Cytoplasmic-facing. Residues 169 to 251 (RHDDEAAYYV…GGSDYSDLPV (83 aa)) form a disordered region. Polar residues predominate over residues 203 to 213 (NASRPSDNHVV). Residues 216-236 (LPPPKPPSPPRKPPPPPPPPA) show a composition bias toward pro residues. Thr-269 bears the Phosphothreonine mark. The 280-residue stretch at 280–559 (FSEANLLGQG…VRALEGNVSL (280 aa)) folds into the Protein kinase domain. ATP is bound by residues 286-294 (LGQGGFGYV) and Lys-308. Phosphotyrosine is present on Tyr-353. The Proton acceptor role is filled by Asp-404. 2 positions are modified to phosphoserine: Ser-408 and Ser-437. Phosphothreonine is present on residues Thr-438 and Thr-443. Tyr-451 is subject to Phosphotyrosine. Polar residues predominate over residues 605–616 (YGTTGEYSNPTS). Residues 605-652 (YGTTGEYSNPTSDYGLYPSGSSSEGQATREMEMGKIKKTGQGYSGPSL) are disordered.

The protein belongs to the protein kinase superfamily. Ser/Thr protein kinase family. As to expression, mostly expressed in inflorescence bolt, flower buds and siliques, and, to a lower extent, in roots, seedlings and leaves.

It is found in the cell membrane. It carries out the reaction L-seryl-[protein] + ATP = O-phospho-L-seryl-[protein] + ADP + H(+). The catalysed reaction is L-threonyl-[protein] + ATP = O-phospho-L-threonyl-[protein] + ADP + H(+). This Arabidopsis thaliana (Mouse-ear cress) protein is Proline-rich receptor-like protein kinase PERK1 (PERK1).